Consider the following 224-residue polypeptide: UPF0758 protein CJA_3522 (224 aa).

Positions leucine 102–leucine 224 constitute an MPN domain. Zn(2+) contacts are provided by histidine 173, histidine 175, and aspartate 186. Residues histidine 173 to aspartate 186 carry the JAMM motif motif.

This sequence belongs to the UPF0758 family.

This Cellvibrio japonicus (strain Ueda107) (Pseudomonas fluorescens subsp. cellulosa) protein is UPF0758 protein CJA_3522.